Reading from the N-terminus, the 870-residue chain is Leucine--tRNA ligase (870 aa).

A 'HIGH' region motif is present at residues 43–53 (PYPSGRLHMGH). A 'KMSKS' region motif is present at residues 626 to 630 (KMSKS). ATP is bound at residue K629.

The protein belongs to the class-I aminoacyl-tRNA synthetase family.

The protein localises to the cytoplasm. It carries out the reaction tRNA(Leu) + L-leucine + ATP = L-leucyl-tRNA(Leu) + AMP + diphosphate. This chain is Leucine--tRNA ligase, found in Pseudoalteromonas atlantica (strain T6c / ATCC BAA-1087).